We begin with the raw amino-acid sequence, 757 residues long: Polyribonucleotide nucleotidyltransferase (757 aa).

Residues D531 and D537 each coordinate Mg(2+). A KH domain is found at 597-656 (PRVTTIRVPVDKIGEVIGPKGKIINAITEETGAQISIEDDGTVFVGATDGPSAQAAIDRI). Residues 668–737 (GERFLGTVVK…KRGKISLVLV (70 aa)) form the S1 motif domain.

It belongs to the polyribonucleotide nucleotidyltransferase family. The cofactor is Mg(2+).

The protein resides in the cytoplasm. The catalysed reaction is RNA(n+1) + phosphate = RNA(n) + a ribonucleoside 5'-diphosphate. In terms of biological role, involved in mRNA degradation. Catalyzes the phosphorolysis of single-stranded polyribonucleotides processively in the 3'- to 5'-direction. This Mycolicibacterium paratuberculosis (strain ATCC BAA-968 / K-10) (Mycobacterium paratuberculosis) protein is Polyribonucleotide nucleotidyltransferase.